Here is a 341-residue protein sequence, read N- to C-terminus: HTH-type transcriptional repressor PurR (341 aa).

Residues 2–56 (ATIKDVAKRANVSTTTVSHVINKTRFVAEETRNAVWTAIKELHYSPSAVARSLKV) form the HTH lacI-type domain. The H-T-H motif DNA-binding region spans 4 to 23 (IKDVAKRANVSTTTVSHVIN). The DNA-binding element occupies 48 to 56 (SAVARSLKV). 5 residues coordinate hypoxanthine: Tyr73, Arg190, Thr192, Phe221, and Asp275.

As to quaternary structure, homodimer.

The protein operates within purine metabolism; purine nucleotide biosynthesis [regulation]. Is the main repressor of the genes involved in the de novo synthesis of purine nucleotides, regulating purB, purC, purEK, purF, purHD, purL, purMN and guaBA expression. PurR is allosterically activated to bind its cognate DNA by binding the purine corepressors, hypoxanthine or guanine, thereby effecting transcription repression. The polypeptide is HTH-type transcriptional repressor PurR (Salmonella paratyphi A (strain ATCC 9150 / SARB42)).